The chain runs to 217 residues: uncharacterized protein (217 aa).

The protein to M.tuberculosis Rv2926c.

This is an uncharacterized protein from Mycobacterium leprae (strain TN).